The chain runs to 124 residues: Small ribosomal subunit protein eS25 (124 aa).

The span at 1–22 (MPPKDSKQKKDAGKSKKDKDPV) shows a compositional bias: basic and acidic residues. The segment at 1–37 (MPPKDSKQKKDAGKSKKDKDPVNKSGGKAKKKKWSKG) is disordered. The span at 27 to 37 (GKAKKKKWSKG) shows a compositional bias: basic residues.

The protein belongs to the eukaryotic ribosomal protein eS25 family. In terms of assembly, component of the small ribosomal subunit.

The protein resides in the cytoplasm. In terms of biological role, component of the small ribosomal subunit. The ribosome is a large ribonucleoprotein complex responsible for the synthesis of proteins in the cell. The polypeptide is Small ribosomal subunit protein eS25 (rps25) (Danio rerio (Zebrafish)).